Consider the following 584-residue polypeptide: FAD-linked oxidoreductase OXR2 (584 aa).

A signal peptide spans 1 to 22 (MRSIISAFILSLNFCTQPLVRG). Asn-75, Asn-97, Asn-115, Asn-225, Asn-302, Asn-321, and Asn-507 each carry an N-linked (GlcNAc...) asparagine glycan. The 183-residue stretch at 128 to 310 (LGMLSEKYIA…LNATFKVEPV (183 aa)) folds into the FAD-binding PCMH-type domain.

This sequence belongs to the oxygen-dependent FAD-linked oxidoreductase family. Requires FAD as cofactor.

It participates in secondary metabolite biosynthesis. Functionally, FAD-linked oxidoreductase; part of the gene cluster that mediates the biosynthesis of a tyrosine-derived cytochalasan acting as a fungal signal recognized by resistant rice plants and leads to avirulence in Pi33 resistant rice cultivars. The first step in the pathway is catalyzed by the hybrid PKS-NRPS ACE1, assisted by the enoyl reductase RAP1, that are responsible for fusion of the tyrosine precursor and the polyketide backbone. The polyketide synthase module (PKS) of ACE1 is responsible for the synthesis of the polyketide backbone and the downstream nonribosomal peptide synthetase (NRPS) amidates the carboxyl end of the polyketide with the tyrosine precursor. Because ACE1 lacks a designated enoylreductase (ER) domain, the required activity is provided the enoyl reductase RAP1. Reduction by the hydrolyase ORFZ, followed by dehydration and intra-molecular Diels-Alder cyclization by the Diels-Alderase ORF3 then yield the required isoindolone-fused macrocycle. A number of oxidative steps catalyzed by the tailoring enzymes identified within the cluster, including cytochrome P450 monooxygenases CYP1 to CYP4, the FAD-linked oxidoreductase OXR2 and the short-chain dehydrogenase/reductase OXR1, are further required to afford the final cytochalasans that confer avirulence and which have still to be identified. The monooxygenase CYP1 has been shown to be a site-selective C-18 hydroxylase whereas the function of CYP3 is the site-selective epoxidation of the C-6/C-7 olefin that is present in some intermediate compounds. Finally, SYN2 and RAP2 are not required for avirulence in Pi33 resistant rice cultivars. The protein is FAD-linked oxidoreductase OXR2 of Pyricularia oryzae (strain 70-15 / ATCC MYA-4617 / FGSC 8958) (Rice blast fungus).